The chain runs to 44 residues: Cuticle protein CP459 (44 aa).

2 tandem repeats follow at residues 3-20 (LLKG…KRLL) and 27-44 (VLLT…NVQF).

Calcified shell.

This chain is Cuticle protein CP459, found in Cancer pagurus (Rock crab).